The primary structure comprises 168 residues: Auxin-responsive protein IAA1 (168 aa).

The interval methionine 1–valine 74 is disordered. The EAR-like (transcriptional repression) motif lies at leucine 14 to leucine 18. Over residues glutamate 23–serine 34 the composition is skewed to polar residues. The 88-residue stretch at valine 74–glycine 161 folds into the PB1 domain.

This sequence belongs to the Aux/IAA family. In terms of assembly, homodimers and heterodimers. Interacts with the auxin-responsive protein IAA2. Interacts with TPL. Post-translationally, phosphorylated by phytochrome A in vitro. In terms of tissue distribution, preferentially expressed in stems, leaves and flowers.

It is found in the nucleus. Aux/IAA proteins are short-lived transcriptional factors that function as repressors of early auxin response genes at low auxin concentrations. Repression is thought to result from the interaction with auxin response factors (ARFs), proteins that bind to the auxin-responsive promoter element (AuxRE). Formation of heterodimers with ARF proteins may alter their ability to modulate early auxin response genes expression. The chain is Auxin-responsive protein IAA1 (IAA1) from Arabidopsis thaliana (Mouse-ear cress).